Here is a 205-residue protein sequence, read N- to C-terminus: Glycerol-3-phosphate acyltransferase (205 aa).

The next 4 helical transmembrane spans lie at 4–24, 80–100, 112–132, and 138–158; these read IAPGMILLAYLCGSISSAILV, PFWLGLIAIAACLGHIWPIFF, FGAIAPIGWDLTGVMAGTWLL, and GYSSLGAIVSALVAPFYVWWF.

The protein belongs to the PlsY family. Probably interacts with PlsX.

The protein resides in the cell inner membrane. It catalyses the reaction an acyl phosphate + sn-glycerol 3-phosphate = a 1-acyl-sn-glycero-3-phosphate + phosphate. The protein operates within lipid metabolism; phospholipid metabolism. Functionally, catalyzes the transfer of an acyl group from acyl-phosphate (acyl-PO(4)) to glycerol-3-phosphate (G3P) to form lysophosphatidic acid (LPA). This enzyme utilizes acyl-phosphate as fatty acyl donor, but not acyl-CoA or acyl-ACP. The sequence is that of Glycerol-3-phosphate acyltransferase from Cronobacter sakazakii (strain ATCC BAA-894) (Enterobacter sakazakii).